The primary structure comprises 179 residues: DNA utilization protein HofN (179 aa).

The helical transmembrane segment at 19–39 (LRFWLLMFVAPLLLAVGITLI) threads the bilayer.

Its subcellular location is the cell inner membrane. Its function is as follows. Required for the use of extracellular DNA as a nutrient. In Escherichia coli (strain K12), this protein is DNA utilization protein HofN (hofN).